The chain runs to 441 residues: Vacuolar cation/proton exchanger 5 (441 aa).

A lipid anchor (N-myristoyl glycine) is attached at glycine 2. Residues 2–69 lie on the Cytoplasmic side of the membrane; that stretch reads GCCKVPALIQ…PNNSVLQSFK (68 aa). Residues cysteine 3 and cysteine 4 are each lipidated (S-palmitoyl cysteine). The chain crosses the membrane as a helical span at residues 70-90; that stretch reads IVILSNKLNLLLPFGPLAILL. Over 91-97 the chain is Extracellular; the sequence is HYLTDNK. A helical membrane pass occupies residues 98–118; that stretch reads GWIFLLSLVGITPLAERLGYA. The Cytoplasmic portion of the chain corresponds to 119-129; that stretch reads TEQLACYTGST. Residues 130 to 150 traverse the membrane as a helical segment; it reads VGGLLNATFGNVTELIISIFA. The interval 139 to 174 is cation selection; the sequence is GNVTELIISIFALKSGMIRVVQLTLLGSILSNMLLV. At 151-165 the chain is on the extracellular side; that stretch reads LKSGMIRVVQLTLLG. The helical transmembrane segment at 166 to 186 threads the bilayer; sequence SILSNMLLVLGCAFFCGGLVF. Residues 187–197 are Cytoplasmic-facing; sequence SQKEQVFDKGN. Residues 198 to 218 traverse the membrane as a helical segment; the sequence is AVVNSGLLLMAVMGLLFPAVL. The Extracellular portion of the chain corresponds to 219–231; that stretch reads HYTHSEVHAGSSE. Residues 232–252 traverse the membrane as a helical segment; it reads LALSRFSSCIMLVAYAAYLFF. Over 253 to 286 the chain is Cytoplasmic; it reads QLKSQPSSYTPLTEETNQNEETSDDDEDPEISKW. The helical transmembrane segment at 287–307 threads the bilayer; sequence EAIIWLSILTAWVSLLSGYLV. Over 308–311 the chain is Extracellular; the sequence is DAIE. The chain crosses the membrane as a helical span at residues 312 to 332; that stretch reads GASVSWKIPISFISVILLPIV. The Cytoplasmic segment spans residues 333–354; sequence GNAAEHAGAIMFAMKDKLDLSL. Residues 333–368 form a cation selection region; it reads GNAAEHAGAIMFAMKDKLDLSLGVAIGSSIQISMFA. A helical transmembrane segment spans residues 355 to 375; it reads GVAIGSSIQISMFAVPFCVVI. The Extracellular portion of the chain corresponds to 376–384; that stretch reads GWMMGAQMD. Residues 385–405 form a helical membrane-spanning segment; sequence LNFQLFETATLFITVIVVAFF. Over 406-412 the chain is Cytoplasmic; it reads LQEGTSN. The chain crosses the membrane as a helical span at residues 413-433; it reads YFKGLMLILCYLIVAASFFVH. The Extracellular portion of the chain corresponds to 434-441; the sequence is EDPHQDDI.

Belongs to the Ca(2+):cation antiporter (CaCA) (TC 2.A.19) family. Cation/proton exchanger (CAX) subfamily.

It is found in the vacuole membrane. In terms of biological role, vacuolar cation/proton exchanger (CAX). Translocates Ca(2+) and other metal ions into vacuoles using the proton gradient formed by H(+)-ATPase and H(+)-pyrophosphatase. The sequence is that of Vacuolar cation/proton exchanger 5 (CAX5) from Arabidopsis thaliana (Mouse-ear cress).